The chain runs to 1025 residues: Multidrug resistance protein MdtC (1025 aa).

The next 12 helical transmembrane spans lie at 3 to 23 (FFALFIYRPVATILLSVAITL), 333 to 353 (EVEQTLIISVALVILVVFLFL), 360 to 380 (IIPAVAVPVSLIGTFAAMYLC), 387 to 407 (LSLMALTIATGFVVDDAIVVL), 431 to 451 (VGFTVLSMSLSLVAVFLPLLL), 463 to 483 (FAVTLSVAIGISLLVSLTLTP), 528 to 548 (LVGVVLLGTIALNIWLYISIP), 853 to 873 (VILIIAAIATVYIVLGILYES), 875 to 895 (VHPLTILSTLPSAGVGALLAL), 897 to 917 (LFNAPFSLIALIGIMLLIGIV), 953 to 973 (PIMMTTLAALFGALPLVLSGG), and 984 to 1004 (ITIVGGLVMSQLLTLYTTPVV).

Belongs to the resistance-nodulation-cell division (RND) (TC 2.A.6) family. MdtC subfamily. As to quaternary structure, part of a tripartite efflux system composed of MdtA, MdtB and MdtC. MdtC forms a heteromultimer with MdtB.

It is found in the cell inner membrane. The MdtABC tripartite complex confers resistance against novobiocin and deoxycholate. This is Multidrug resistance protein MdtC from Escherichia coli O7:K1 (strain IAI39 / ExPEC).